We begin with the raw amino-acid sequence, 670 residues long: Probable potassium transport system protein Kup 1 (670 aa).

13 consecutive transmembrane segments (helical) span residues 14 to 34 (GAGF…SPLY), 58 to 78 (LSLI…WIAL), 101 to 121 (WLII…ALTP), 147 to 167 (LPIV…QRFG), 175 to 195 (FGPV…INLF), 196 to 216 (GDFS…LLSP), 220 to 240 (AGIF…ALYS), 252 to 272 (VSWP…GAWL), 294 to 314 (LIIF…QALI), 345 to 365 (LYIP…VVYF), 374 to 394 (AYGL…TVYL), 403 to 423 (VLVG…FAAS), and 427 to 447 (FMHG…VMAI).

It belongs to the HAK/KUP transporter (TC 2.A.72) family.

The protein resides in the cell membrane. The enzyme catalyses K(+)(in) + H(+)(in) = K(+)(out) + H(+)(out). Transport of potassium into the cell. Likely operates as a K(+):H(+) symporter. The sequence is that of Probable potassium transport system protein Kup 1 from Lactococcus lactis subsp. lactis (strain IL1403) (Streptococcus lactis).